The primary structure comprises 114 residues: Large ribosomal subunit protein bL20c (114 aa).

It belongs to the bacterial ribosomal protein bL20 family.

It is found in the plastid. The protein resides in the chloroplast. In terms of biological role, binds directly to 23S ribosomal RNA and is necessary for the in vitro assembly process of the 50S ribosomal subunit. It is not involved in the protein synthesizing functions of that subunit. The sequence is that of Large ribosomal subunit protein bL20c from Psilotum nudum (Whisk fern).